Consider the following 193-residue polypeptide: Large ribosomal subunit protein bL9 (193 aa).

The interval 155–193 is disordered; that stretch reads AEGETLTSAEAIYDIQEKPLAENQEEMNDNDANSINEQA. The span at 184–193 shows a compositional bias: polar residues; that stretch reads NDANSINEQA.

Belongs to the bacterial ribosomal protein bL9 family.

In terms of biological role, binds to the 23S rRNA. This Bartonella quintana (strain Toulouse) (Rochalimaea quintana) protein is Large ribosomal subunit protein bL9.